A 183-amino-acid polypeptide reads, in one-letter code: Protein Dr1 (183 aa).

Residues 19-82 enclose the Histone-fold domain; that stretch reads TLPRASINKI…INAEHVLEAL (64 aa). Residues 92–183 form a repression of TATA-containing promoters region; the sequence is QEAEAVLHDC…DDDDDDDDDY (92 aa). Positions 155–183 are disordered; the sequence is AMVQRPPLADGSVASKPSEDDDDDDDDDY. Acidic residues predominate over residues 173–183; that stretch reads EDDDDDDDDDY.

This sequence belongs to the NC2 beta/DR1 family. In terms of assembly, component of the Ada2a-containing (ATAC) complex composed of at least Ada2a, Atac1, Hcf, Ada3, Gcn5, Mocs2B, Charac-14, Atac3, Atac2, NC2beta and wds. Homodimer. Interacts with NC2-alpha/Drap1 to form the dNC2 complex.

It is found in the nucleus. Bifunctional basic transcription factor. Activates transcription of DPE (Downstream Promoter Element) containing promoters while repressing transcription of promoters which contain TATA elements. Together with Chrac-14, promotes nucleosome sliding of ATP-dependent nucleosome remodeling complexes. In Drosophila melanogaster (Fruit fly), this protein is Protein Dr1 (NC2beta).